We begin with the raw amino-acid sequence, 401 residues long: Probable sodium/metabolite cotransporter BASS5, chloroplastic (401 aa).

The N-terminal 46 residues, 1-46 (MAPNAAVLVRPHIAGVHHLPTGRRLPRLAPPQAVSPPFSRQKGSVV), are a transit peptide targeting the chloroplast. 9 consecutive transmembrane segments (helical) span residues 93–113 (TIIP…PPSF), 122–142 (APAL…KDFI), 159–179 (FIIK…IFNL), 185–205 (AGIM…ATFL), 215–235 (IVMT…LSYF), 247–267 (GMMS…LLLN), 273–293 (LCSA…ALCV), 299–319 (INIK…LFAF), and 372–392 (LVGV…FALV).

Belongs to the bile acid:sodium symporter (BASS) (TC 2.A.28) family.

The protein localises to the membrane. Its subcellular location is the plastid. It localises to the chloroplast envelope. In terms of biological role, may function as sodium-coupled metabolite transporter across the chloroplast envelope. The protein is Probable sodium/metabolite cotransporter BASS5, chloroplastic (BASS5) of Oryza sativa subsp. indica (Rice).